The chain runs to 378 residues: Chaperone protein DnaJ (378 aa).

Residues 5–69 (EYYDRLGVSK…QKRAAYDQYG (65 aa)) enclose the J domain. The CR-type zinc finger occupies 134 to 216 (GVEKEVSYNR…CHGTGHEKQA (83 aa)). Positions 147, 150, 164, 167, 190, 193, 204, and 207 each coordinate Zn(2+). CXXCXGXG motif repeat units follow at residues 147–154 (CGTCLGSG), 164–171 (CRKCHGSG), 190–197 (CDICHGSG), and 204–211 (CQTCHGTG).

Belongs to the DnaJ family. As to quaternary structure, homodimer. The cofactor is Zn(2+).

It localises to the cytoplasm. Functionally, participates actively in the response to hyperosmotic and heat shock by preventing the aggregation of stress-denatured proteins and by disaggregating proteins, also in an autonomous, DnaK-independent fashion. Unfolded proteins bind initially to DnaJ; upon interaction with the DnaJ-bound protein, DnaK hydrolyzes its bound ATP, resulting in the formation of a stable complex. GrpE releases ADP from DnaK; ATP binding to DnaK triggers the release of the substrate protein, thus completing the reaction cycle. Several rounds of ATP-dependent interactions between DnaJ, DnaK and GrpE are required for fully efficient folding. Also involved, together with DnaK and GrpE, in the DNA replication of plasmids through activation of initiation proteins. This Streptococcus pyogenes serotype M1 protein is Chaperone protein DnaJ.